We begin with the raw amino-acid sequence, 193 residues long: Cyanate hydratase (193 aa).

Active-site residues include arginine 121, glutamate 124, and serine 147.

It belongs to the cyanase family.

The enzyme catalyses cyanate + hydrogencarbonate + 3 H(+) = NH4(+) + 2 CO2. Its function is as follows. Catalyzes the reaction of cyanate with bicarbonate to produce ammonia and carbon dioxide. The sequence is that of Cyanate hydratase from Phaeodactylum tricornutum (strain CCAP 1055/1).